The chain runs to 183 residues: Large ribosomal subunit protein uL13m (183 aa).

Belongs to the universal ribosomal protein uL13 family. As to quaternary structure, component of the mitochondrial large ribosomal subunit (mt-LSU). Mature N.crassa 74S mitochondrial ribosomes consist of a small (37S) and a large (54S) subunit. The 37S small subunit contains a 16S ribosomal RNA (16S mt-rRNA) and 32 different proteins. The 54S large subunit contains a 23S rRNA (23S mt-rRNA) and 42 different proteins.

The protein resides in the mitochondrion. Functionally, component of the mitochondrial ribosome (mitoribosome), a dedicated translation machinery responsible for the synthesis of mitochondrial genome-encoded proteins, including at least some of the essential transmembrane subunits of the mitochondrial respiratory chain. The mitoribosomes are attached to the mitochondrial inner membrane and translation products are cotranslationally integrated into the membrane. This chain is Large ribosomal subunit protein uL13m (mrpl23), found in Neurospora crassa (strain ATCC 24698 / 74-OR23-1A / CBS 708.71 / DSM 1257 / FGSC 987).